A 203-amino-acid chain; its full sequence is MSQLSLTLLMIVAAYLAGSVSSAVLVCRMRGLPDPRSQGSGNPGATNVLRIGGASSAAMVLFFDMLKGALPTYLAYLMGIDAISLGLIAIAACLGHIYPVFFGFKGGKGVATAFGAMAPIGDDLAICLMASWVVLVLISRYSSLAAIITALLAPLYTWWLDDRFTIPVAMLSTLIIIRHKDNIKRLLKGEESKVSRKRRPKIP.

4 consecutive transmembrane segments (helical) span residues 6-26, 82-102, 118-138, and 141-161; these read LTLL…AVLV, AISL…PVFF, APIG…LVLI, and YSSL…WWLD.

The protein belongs to the PlsY family. In terms of assembly, probably interacts with PlsX.

The protein resides in the cell inner membrane. It carries out the reaction an acyl phosphate + sn-glycerol 3-phosphate = a 1-acyl-sn-glycero-3-phosphate + phosphate. It functions in the pathway lipid metabolism; phospholipid metabolism. In terms of biological role, catalyzes the transfer of an acyl group from acyl-phosphate (acyl-PO(4)) to glycerol-3-phosphate (G3P) to form lysophosphatidic acid (LPA). This enzyme utilizes acyl-phosphate as fatty acyl donor, but not acyl-CoA or acyl-ACP. This is Glycerol-3-phosphate acyltransferase from Shewanella oneidensis (strain ATCC 700550 / JCM 31522 / CIP 106686 / LMG 19005 / NCIMB 14063 / MR-1).